Consider the following 397-residue polypeptide: F-box protein At3g49450 (397 aa).

Positions 26 to 75 (GENSGTLPTDLMVEILSRVPAKSAARFRCVSNDWNSLLRSPYLTNLFLKR) constitute an F-box domain.

This is F-box protein At3g49450 from Arabidopsis thaliana (Mouse-ear cress).